A 143-amino-acid polypeptide reads, in one-letter code: Flagellar assembly factor FliW (143 aa).

This sequence belongs to the FliW family. As to quaternary structure, interacts with translational regulator CsrA and flagellin(s).

It is found in the cytoplasm. Its function is as follows. Acts as an anti-CsrA protein, binds CsrA and prevents it from repressing translation of its target genes, one of which is flagellin. Binds to flagellin and participates in the assembly of the flagellum. The polypeptide is Flagellar assembly factor FliW (Clostridium botulinum (strain Okra / Type B1)).